The following is a 173-amino-acid chain: NADH-ubiquinone oxidoreductase chain 6 (173 aa).

The next 6 helical transmembrane spans lie at 1–21, 27–47, 53–73, 82–102, 106–126, and 141–161; these read MIYF…AVAS, FAAL…VGYG, LVLF…SAAL, WGSW…LLVG, YGWW…MSVL, and GFLL…VLEI.

Belongs to the complex I subunit 6 family.

The protein resides in the mitochondrion membrane. It carries out the reaction a ubiquinone + NADH + 5 H(+)(in) = a ubiquinol + NAD(+) + 4 H(+)(out). Core subunit of the mitochondrial membrane respiratory chain NADH dehydrogenase (Complex I) that is believed to belong to the minimal assembly required for catalysis. Complex I functions in the transfer of electrons from NADH to the respiratory chain. The immediate electron acceptor for the enzyme is believed to be ubiquinone. The protein is NADH-ubiquinone oxidoreductase chain 6 (MT-ND6) of Latimeria chalumnae (Coelacanth).